Here is a 396-residue protein sequence, read N- to C-terminus: Elongation factor Tu (396 aa).

Positions 10-205 constitute a tr-type G domain; sequence KSHANIGTIG…AVDEYIPTPE (196 aa). Residues 19-26 form a G1 region; sequence GHVDHGKT. A GTP-binding site is contributed by 19-26; that stretch reads GHVDHGKT. Threonine 26 provides a ligand contact to Mg(2+). The interval 61 to 65 is G2; that stretch reads GITIS. The segment at 82–85 is G3; that stretch reads DCPG. GTP contacts are provided by residues 82-86 and 137-140; these read DCPGH and NKCD. The G4 stretch occupies residues 137–140; it reads NKCD. A G5 region spans residues 175–177; the sequence is SAL.

The protein belongs to the TRAFAC class translation factor GTPase superfamily. Classic translation factor GTPase family. EF-Tu/EF-1A subfamily. In terms of assembly, monomer.

Its subcellular location is the cytoplasm. It carries out the reaction GTP + H2O = GDP + phosphate + H(+). Its function is as follows. GTP hydrolase that promotes the GTP-dependent binding of aminoacyl-tRNA to the A-site of ribosomes during protein biosynthesis. This Bacillus licheniformis (strain ATCC 14580 / DSM 13 / JCM 2505 / CCUG 7422 / NBRC 12200 / NCIMB 9375 / NCTC 10341 / NRRL NRS-1264 / Gibson 46) protein is Elongation factor Tu.